Here is a 102-residue protein sequence, read N- to C-terminus: Aspartyl/glutamyl-tRNA(Asn/Gln) amidotransferase subunit C (102 aa).

This sequence belongs to the GatC family. In terms of assembly, heterotrimer of A, B and C subunits.

It catalyses the reaction L-glutamyl-tRNA(Gln) + L-glutamine + ATP + H2O = L-glutaminyl-tRNA(Gln) + L-glutamate + ADP + phosphate + H(+). The enzyme catalyses L-aspartyl-tRNA(Asn) + L-glutamine + ATP + H2O = L-asparaginyl-tRNA(Asn) + L-glutamate + ADP + phosphate + 2 H(+). Allows the formation of correctly charged Asn-tRNA(Asn) or Gln-tRNA(Gln) through the transamidation of misacylated Asp-tRNA(Asn) or Glu-tRNA(Gln) in organisms which lack either or both of asparaginyl-tRNA or glutaminyl-tRNA synthetases. The reaction takes place in the presence of glutamine and ATP through an activated phospho-Asp-tRNA(Asn) or phospho-Glu-tRNA(Gln). The protein is Aspartyl/glutamyl-tRNA(Asn/Gln) amidotransferase subunit C of Bordetella bronchiseptica (strain ATCC BAA-588 / NCTC 13252 / RB50) (Alcaligenes bronchisepticus).